The sequence spans 515 residues: Protein FAM98A (515 aa).

2 disordered regions span residues 297–411 (VLMG…YHGG) and 432–515 (SGYQ…HYTS). The span at 302–311 (VPDRGGRPNE) shows a compositional bias: basic and acidic residues. Over residues 382 to 395 (WTDGGSASGGGYQD) the composition is skewed to gly residues. Basic and acidic residues predominate over residues 444-456 (RYQDGGHHGERGS). A compositionally biased stretch (gly residues) spans 457–481 (GRGGRGGRGGRGGRGSQGGGWGGRG). Positions 485–501 (YHQGGQFEQHFQHGGYQ) are enriched in low complexity. Residues 502 to 515 (YSHSGFGQGRHYTS) are compositionally biased toward polar residues.

Belongs to the FAM98 family. In terms of assembly, interacts (via N- and C-terminus) with DDX1. Interacts (via N- and C-terminus) with C14orf166. Interacts with FAM98B. Interacts with PLEKHM1 (via N- and C-terminus).

In terms of biological role, positively stimulates PRMT1-induced protein arginine methylation. Involved in skeletal homeostasis. Positively regulates lysosome peripheral distribution and ruffled border formation in osteoclasts. This is Protein FAM98A from Rattus norvegicus (Rat).